We begin with the raw amino-acid sequence, 419 residues long: Gustatory receptor for bitter taste 93a (419 aa).

The Cytoplasmic portion of the chain corresponds to 1 to 55 (MFSSSSAMTGKRAESWSRLLLLWLYRCARGLLVLSSSLDRDKLQLKATKQGSRNR). A helical transmembrane segment spans residues 56-76 (FLHILWRCIVVMIYAGLWPML). Residues 77–90 (TSAVIGKRLESYAD) lie on the Extracellular side of the membrane. Residues 91–111 (VLALAQSMSVSILAVISFVIQ) form a helical membrane-spanning segment. At 112–145 (ARGENQFREVLNRYLALYQRICLTTRLRHLFPTK) the chain is on the cytoplasmic side. Residues 146 to 166 (FVVFFLLKLFFTLCGCFHEII) form a helical membrane-spanning segment. Topologically, residues 167-184 (PLFENSHFDDISQMVGTG) are extracellular. Residues 185-205 (FGIYMWLGTLCVLDACFLGFL) traverse the membrane as a helical segment. Residues 206–277 (VSGILYEHMA…NSFRRILQWQ (72 aa)) lie on the Cytoplasmic side of the membrane. The helical transmembrane segment at 278-298 (ILFYIYLNFINICLMLYQYIL) threads the bilayer. Residues 299–305 (HFLNDDE) lie on the Extracellular side of the membrane. Residues 306-326 (VVFVSIVMAFVKLANLVLLMM) traverse the membrane as a helical segment. The Cytoplasmic segment spans residues 327 to 383 (CADYTVRQSEVPKKLPLDIVCSDMDERWDKSVETFLGQLQTQRLEIKVLGFFHLNNE). The helical transmembrane segment at 384-404 (FILLILSAIISYLFILIQFGI) threads the bilayer. The Extracellular portion of the chain corresponds to 405 to 419 (TGGFEASEDIKNRFD).

Belongs to the insect chemoreceptor superfamily. Gustatory receptor (GR) family. Gr93a subfamily. In larvae, is expressed in neurons of the dorsal pharyngeal sense organs.

The protein localises to the cell membrane. Gustatory receptor required for response to the bitter in taste neurons. Gr93a cells respond to bitter compounds such as caffeine. Flies avoid bitter substances, suggesting that Gr93a neuron activity is sufficient to mediate avoidance behavior. The polypeptide is Gustatory receptor for bitter taste 93a (Gr93a) (Drosophila melanogaster (Fruit fly)).